The sequence spans 39 residues: Contryphan-Cal4 (39 aa).

The signal sequence occupies residues 1–20 (MTRTAVLLLTLLFLVAMAAS). A disulfide bridge links cysteine 29 with cysteine 35.

Expressed by the venom duct.

It localises to the secreted. In terms of biological role, probable neurotoxin. This chain is Contryphan-Cal4, found in Californiconus californicus (California cone).